A 279-amino-acid polypeptide reads, in one-letter code: Large ribosomal subunit protein uL2 (279 aa).

A disordered region spans residues 223–279; it reads TVRGSAMNPNDHPHGGGEGRSPVGMDAPRTPWGKRHMGVKTRNNKKSSTSMIVRRRK. The span at 254-267 shows a compositional bias: basic residues; sequence WGKRHMGVKTRNNK.

It belongs to the universal ribosomal protein uL2 family. In terms of assembly, part of the 50S ribosomal subunit. Forms a bridge to the 30S subunit in the 70S ribosome.

In terms of biological role, one of the primary rRNA binding proteins. Required for association of the 30S and 50S subunits to form the 70S ribosome, for tRNA binding and peptide bond formation. It has been suggested to have peptidyltransferase activity; this is somewhat controversial. Makes several contacts with the 16S rRNA in the 70S ribosome. The chain is Large ribosomal subunit protein uL2 from Ureaplasma parvum serovar 3 (strain ATCC 27815 / 27 / NCTC 11736).